The following is a 178-amino-acid chain: Protein FLOWERING LOCUS T 1 (178 aa).

It belongs to the phosphatidylethanolamine-binding protein family. Expressed in leaves but not in shoot apex.

Functionally, involved in the regulation of vernalization and of flowering time. The protein is Protein FLOWERING LOCUS T 1 of Brachypodium distachyon (Purple false brome).